A 475-amino-acid polypeptide reads, in one-letter code: ATP synthase subunit beta (475 aa).

152–159 contacts ATP; that stretch reads GGAGVGKT.

This sequence belongs to the ATPase alpha/beta chains family. F-type ATPases have 2 components, CF(1) - the catalytic core - and CF(0) - the membrane proton channel. CF(1) has five subunits: alpha(3), beta(3), gamma(1), delta(1), epsilon(1). CF(0) has three main subunits: a(1), b(2) and c(9-12). The alpha and beta chains form an alternating ring which encloses part of the gamma chain. CF(1) is attached to CF(0) by a central stalk formed by the gamma and epsilon chains, while a peripheral stalk is formed by the delta and b chains.

It localises to the cell inner membrane. The catalysed reaction is ATP + H2O + 4 H(+)(in) = ADP + phosphate + 5 H(+)(out). Produces ATP from ADP in the presence of a proton gradient across the membrane. The catalytic sites are hosted primarily by the beta subunits. This is ATP synthase subunit beta from Wolbachia sp. subsp. Drosophila simulans (strain wRi).